The chain runs to 384 residues: S-adenosylmethionine synthase (384 aa).

Residue H15 coordinates ATP. Mg(2+) is bound at residue D17. A K(+)-binding site is contributed by E43. 2 residues coordinate L-methionine: E56 and Q99. Residues 99–109 form a flexible loop region; it reads QSPDINQGVDR. Residues 164-166, 230-231, D239, 245-246, A262, and K266 each bind ATP; these read DAK, RF, and RK. D239 is a binding site for L-methionine. L-methionine is bound at residue K270.

Belongs to the AdoMet synthase family. Homotetramer; dimer of dimers. It depends on Mg(2+) as a cofactor. K(+) is required as a cofactor.

It localises to the cytoplasm. It carries out the reaction L-methionine + ATP + H2O = S-adenosyl-L-methionine + phosphate + diphosphate. The protein operates within amino-acid biosynthesis; S-adenosyl-L-methionine biosynthesis; S-adenosyl-L-methionine from L-methionine: step 1/1. Catalyzes the formation of S-adenosylmethionine (AdoMet) from methionine and ATP. The overall synthetic reaction is composed of two sequential steps, AdoMet formation and the subsequent tripolyphosphate hydrolysis which occurs prior to release of AdoMet from the enzyme. In Salmonella choleraesuis (strain SC-B67), this protein is S-adenosylmethionine synthase.